Reading from the N-terminus, the 238-residue chain is MSSIALGVNIDHIATLRNARNTEYPDLVEIANIAVNNGADFITVHLREDRRHIRDSDVFRLKDNLNVPLNLEIAAIDEMLAIAIAVQPECVCLVPEKRQELTTEGGLDVKNMFTYLMPFVTQLHNHNIKVTLFVEPDINQINYAKKLSVDNIELHTGVYCNHNTQNELNRILEAAKHCYTNKIECHAGHGLDYQSAATIARVPYISALNIGHFLICEAVLHGIGTSIYKMKKVITNPL.

3-amino-2-oxopropyl phosphate is bound at residue asparagine 9. 11–12 (DH) provides a ligand contact to 1-deoxy-D-xylulose 5-phosphate. Arginine 20 contributes to the 3-amino-2-oxopropyl phosphate binding site. Histidine 45 acts as the Proton acceptor in catalysis. 1-deoxy-D-xylulose 5-phosphate-binding residues include arginine 47 and histidine 52. Catalysis depends on glutamate 72, which acts as the Proton acceptor. Threonine 102 is a 1-deoxy-D-xylulose 5-phosphate binding site. Catalysis depends on histidine 189, which acts as the Proton donor. 3-amino-2-oxopropyl phosphate contacts are provided by residues glycine 190 and 211–212 (GH).

The protein belongs to the PNP synthase family. In terms of assembly, homooctamer; tetramer of dimers.

Its subcellular location is the cytoplasm. It catalyses the reaction 3-amino-2-oxopropyl phosphate + 1-deoxy-D-xylulose 5-phosphate = pyridoxine 5'-phosphate + phosphate + 2 H2O + H(+). It participates in cofactor biosynthesis; pyridoxine 5'-phosphate biosynthesis; pyridoxine 5'-phosphate from D-erythrose 4-phosphate: step 5/5. In terms of biological role, catalyzes the complicated ring closure reaction between the two acyclic compounds 1-deoxy-D-xylulose-5-phosphate (DXP) and 3-amino-2-oxopropyl phosphate (1-amino-acetone-3-phosphate or AAP) to form pyridoxine 5'-phosphate (PNP) and inorganic phosphate. In Ehrlichia ruminantium (strain Gardel), this protein is Pyridoxine 5'-phosphate synthase.